The following is a 74-amino-acid chain: Conotoxin Im6.10 (74 aa).

Residues 1-19 (MKTGMIICLLLIAFMDADG) form the signal peptide. A propeptide spanning residues 20–47 (SPGDTLYSQKTADTDSGMKRFQKTFQKR) is cleaved from the precursor. 3 disulfides stabilise this stretch: cysteine 49/cysteine 58, cysteine 52/cysteine 63, and cysteine 57/cysteine 73.

As to expression, expressed by the venom duct.

Its subcellular location is the secreted. Its function is as follows. Probable neurotoxin. This is Conotoxin Im6.10 from Conus imperialis (Imperial cone).